Here is a 215-residue protein sequence, read N- to C-terminus: MLEKRLLRMGMRLQLLRDRRISSRGPGLHRAKADPQQQKRLTTGLMTQAETQKEAQQRQAAMRKTALWHTGHLQPKTHTHTGMHTQTHRERERNTQRLRDRERRENGRHTHRHTHTLTHTHTHRDTHTASYRRGIETHTTRQPLRLRGSAHDENDPRVREQPRGTQADLSSRSRMAARLLGRLTPTNTVRAGLRLGSRAASPDPAWGFLIVVGPL.

The disordered stretch occupies residues 74-172; the sequence is QPKTHTHTGM…RGTQADLSSR (99 aa). Positions 87-108 are enriched in basic and acidic residues; the sequence is THRERERNTQRLRDRERRENGR. The span at 109–122 shows a compositional bias: basic residues; that stretch reads HTHRHTHTLTHTHT. 2 stretches are compositionally biased toward basic and acidic residues: residues 123-139 and 149-162; these read HRDT…ETHT and SAHD…REQP. Residues 163-172 are compositionally biased toward polar residues; the sequence is RGTQADLSSR.

Belongs to the FAM27 family.

This is Protein FAM27D1 (FAM27D1) from Homo sapiens (Human).